The following is a 495-amino-acid chain: DUF21 domain-containing protein At4g14230 (495 aa).

The Extracellular segment spans residues 1 to 42 (MHPINAVVAARMLAGISQSNALQSEAIPFGSLEWITYAGISC). In terms of domain architecture, CNNM transmembrane spans 30–212 (GSLEWITYAG…GKGGELTHDE (183 aa)). Residues 43-63 (FLVLFAGIMSGLTLGLMSLGL) traverse the membrane as a helical segment. At 64–92 (VELEILQRSGTPKEKKQSAAIFPVVQKQH) the chain is on the cytoplasmic side. Residues 93-113 (QLLVTLLLFNALAMEGLPIYL) traverse the membrane as a helical segment. The Extracellular segment spans residues 114-120 (DKIFNEY). Residues 121 to 141 (VAIILSVTFVLFVGEVIPQAI) form a helical membrane-spanning segment. Over 142–146 (CTRYG) the chain is Cytoplasmic. The chain crosses the membrane as a helical span at residues 147–167 (LAVGANLVWLVRILMVLSYPI). Residues 168–495 (SFPIAKMLDW…TMTGPPQGNN (328 aa)) lie on the Extracellular side of the membrane. 3 CBS domains span residues 231 to 291 (MTPI…TGTL), 296 to 356 (GIRR…NNSE), and 357 to 426 (LTAP…IVDE). Residues 330–354 (KGKSKGHPSTLHEENSGESNVSSNN) form a disordered region. The N-linked (GlcNAc...) asparagine glycan is linked to N349. S352 bears the Phosphoserine mark. N353 is a glycosylation site (N-linked (GlcNAc...) asparagine). The segment at 455–495 (SGRRLLGPKGSGGPKTPKASSTPKPDDKLMGTMTGPPQGNN) is disordered. Over residues 456–477 (GRRLLGPKGSGGPKTPKASSTP) the composition is skewed to low complexity.

The protein localises to the membrane. In Arabidopsis thaliana (Mouse-ear cress), this protein is DUF21 domain-containing protein At4g14230 (CBSDUF2).